We begin with the raw amino-acid sequence, 145 residues long: Anaerobic nitrite reductase NSHB5 (145 aa).

The Globin domain occupies 2-142; the sequence is GFSETQEELV…LAAAIKEEMK (141 aa). The short motif at 35-39 is the Homodimerization element; sequence EIAPA. Heme b is bound by residues Ser-45, His-59, Lys-61, Arg-84, Thr-88, and His-89. The Homodimerization signature appears at 96-108; it reads DAHFEVVKTALLD.

Belongs to the plant globin family. As to quaternary structure, homodimer. Heme b is required as a cofactor. Expressed in embryonic (embryos, coleoptiles and seminal roots) and vegetative (leaves and roots) organs.

It localises to the cytoplasm. The protein localises to the nucleus. The enzyme catalyses Fe(III)-heme b-[protein] + nitric oxide + H2O = Fe(II)-heme b-[protein] + nitrite + 2 H(+). Its function is as follows. Phytoglobin that reduces nitrite to nitric oxide under anoxic conditions (e.g. during flooding or in waterlogged soil). May not function as an oxygen storage or transport protein. Has an unusually high affinity for O(2) through an hexacoordinate heme iron because of a very low dissociation constant. The polypeptide is Anaerobic nitrite reductase NSHB5 (Oryza sativa subsp. indica (Rice)).